Consider the following 797-residue polypeptide: GDH/6PGL endoplasmic bifunctional protein (797 aa).

An N-terminal signal peptide occupies residues 1-24; it reads MKCPGVWGMLTVTMCVVFLGCPQA. Gln25 is subject to Pyrrolidone carboxylic acid. The tract at residues 25 to 531 is hexose-6-phosphate dehydrogenase; the sequence is QELQGHVSVI…SGSHLSFSLG (507 aa). Residues 37–44 and Tyr154 each bind NADP(+); that span reads GATGDLAK. Residue Asn162 is glycosylated (N-linked (GlcNAc...) asparagine). Lys179 provides a ligand contact to NADP(+). D-glucose 6-phosphate contacts are provided by residues Lys179, 209 to 213, Glu248, and Asp267; that span reads HYLGK. Position 213 is an N6-succinyllysine (Lys213). His272 serves as the catalytic Proton acceptor. Asn287 carries an N-linked (GlcNAc...) asparagine glycan. Positions 365 and 370 each coordinate D-glucose 6-phosphate. An NADP(+)-binding site is contributed by Arg375. The linker stretch occupies residues 532–545; sequence QPEQLVPGPGSTPR. Residues 546 to 797 form a 6-phosphogluconolactonase region; sequence PSDFQVLGAK…WYMDYEAFLG (252 aa). Position 623 (Trp623) interacts with NADP(+). The N-linked (GlcNAc...) asparagine glycan is linked to Asn689.

In the N-terminal section; belongs to the glucose-6-phosphate dehydrogenase family. The protein in the C-terminal section; belongs to the glucosamine/galactosamine-6-phosphate isomerase family. 6-phosphogluconolactonase subfamily. In terms of assembly, homodimer.

It localises to the endoplasmic reticulum lumen. The catalysed reaction is D-glucose 6-phosphate + NAD(+) = 6-phospho-D-glucono-1,5-lactone + NADH + H(+). It catalyses the reaction D-glucose 6-phosphate + NADP(+) = 6-phospho-D-glucono-1,5-lactone + NADPH + H(+). The enzyme catalyses 6-phospho-D-glucono-1,5-lactone + H2O = 6-phospho-D-gluconate + H(+). It carries out the reaction 2-deoxy-D-glucose 6-phosphate + NAD(+) = 2-deoxy-6-phospho-D-glucono-1,5-lactone + NADH + H(+). The catalysed reaction is 2-deoxy-D-glucose 6-phosphate + NADP(+) = 2-deoxy-6-phospho-D-glucono-1,5-lactone + NADPH + H(+). It catalyses the reaction D-galactose 6-phosphate + NADP(+) = 6-phospho-D-galactono-1,5-lactone + NADPH + H(+). The enzyme catalyses D-galactose 6-phosphate + NAD(+) = 6-phospho-D-galactono-1,5-lactone + NADH + H(+). It carries out the reaction D-glucosamine 6-phosphate + NADP(+) = 2-amino-2-deoxy-6-phospho-D-glucono-1,5-lactone + NADPH + 2 H(+). The catalysed reaction is D-glucose + NAD(+) = D-glucono-1,5-lactone + NADH + H(+). It catalyses the reaction D-glucose + NADP(+) = D-glucono-1,5-lactone + NADPH + H(+). The enzyme catalyses D-glucose 6-sulfate + NADP(+) = 6-sulfo-D-glucono-1,5-lactone + NADPH + H(+). The protein operates within carbohydrate degradation; pentose phosphate pathway; D-ribulose 5-phosphate from D-glucose 6-phosphate (oxidative stage). It functions in the pathway carbohydrate degradation; pentose phosphate pathway; D-ribulose 5-phosphate from D-glucose 6-phosphate (oxidative stage): step 2/3. Its function is as follows. Bifunctional enzyme localized in the lumen of the endoplasmic reticulum that catalyzes the first two steps of the oxidative branch of the pentose phosphate pathway/shunt, an alternative to glycolysis and a major source of reducing power and metabolic intermediates for biosynthetic processes. Has a hexose-6-phosphate dehydrogenase activity, with broad substrate specificity compared to glucose-6-phosphate 1-dehydrogenase/G6PD, and catalyzes the first step of the pentose phosphate pathway. In addition, acts as a 6-phosphogluconolactonase and catalyzes the second step of the pentose phosphate pathway. May have a dehydrogenase activity for alternative substrates including glucosamine 6-phosphate and glucose 6-sulfate. The main function of this enzyme is to provide reducing equivalents such as NADPH to maintain the adequate levels of reductive cofactors in the oxidizing environment of the endoplasmic reticulum. By producing NADPH that is needed by reductases of the lumen of the endoplasmic reticulum like corticosteroid 11-beta-dehydrogenase isozyme 1/HSD11B1, indirectly regulates their activity. This is GDH/6PGL endoplasmic bifunctional protein from Oryctolagus cuniculus (Rabbit).